Consider the following 249-residue polypeptide: Probable septum site-determining protein MinC (249 aa).

The tract at residues 116-149 (AAVSPPPPPPPPPARAEPAAPVARPAPGRMQRNA) is disordered. The segment covering 119-130 (SPPPPPPPPPAR) has biased composition (pro residues). A compositionally biased stretch (low complexity) spans 131 to 142 (AEPAAPVARPAP).

Belongs to the MinC family. As to quaternary structure, interacts with MinD and FtsZ.

In terms of biological role, cell division inhibitor that blocks the formation of polar Z ring septums. Rapidly oscillates between the poles of the cell to destabilize FtsZ filaments that have formed before they mature into polar Z rings. Prevents FtsZ polymerization. This Xanthomonas campestris pv. campestris (strain ATCC 33913 / DSM 3586 / NCPPB 528 / LMG 568 / P 25) protein is Probable septum site-determining protein MinC.